The primary structure comprises 284 residues: Co-chaperone protein DjlA (284 aa).

Over 1–6 (MHIFGK) the chain is Periplasmic. A helical transmembrane segment spans residues 7 to 30 (ILGAFFGLLLGGPFGLLFGLFIGH). The Cytoplasmic segment spans residues 31 to 284 (QFDKARRLSQ…DLIKKVKGFK (254 aa)). The region spanning 218-284 (DAYKILDVSP…DLIKKVKGFK (67 aa)) is the J domain.

In terms of assembly, homodimer.

It is found in the cell inner membrane. Its function is as follows. Regulatory DnaK co-chaperone. Direct interaction between DnaK and DjlA is needed for the induction of the wcaABCDE operon, involved in the synthesis of a colanic acid polysaccharide capsule, possibly through activation of the RcsB/RcsC phosphotransfer signaling pathway. The colanic acid capsule may help the bacterium survive conditions outside the host. The polypeptide is Co-chaperone protein DjlA (Vibrio parahaemolyticus serotype O3:K6 (strain RIMD 2210633)).